We begin with the raw amino-acid sequence, 1883 residues long: Zinc finger protein 106 (1883 aa).

Residues Ile6 and Lys37 each participate in a glycyl lysine isopeptide (Lys-Gly) (interchain with G-Cter in SUMO2) cross-link. A C2H2-type 1; atypical zinc finger spans residues 20–44; sequence HECRVCGVTEVGLSAYAKHISGQLH. Residues 39–162 are disordered; that stretch reads ISGQLHKDNV…NGGGPRGRSG (124 aa). The span at 52 to 67 shows a compositional bias: acidic residues; it reads EREDDGKGEEEEEDYF. Residues Lys69 and Lys76 each participate in a glycyl lysine isopeptide (Lys-Gly) (interchain with G-Cter in SUMO2) cross-link. 3 stretches are compositionally biased toward basic and acidic residues: residues 77–86, 96–116, and 128–138; these read QRKEQSRQDE, SDDR…DRES, and PQRDWKWEKDG. Residue Lys133 forms a Glycyl lysine isopeptide (Lys-Gly) (interchain with G-Cter in SUMO2) linkage. The span at 139-148 shows a compositional bias: polar residues; it reads FNNTRKNSFP. Glycyl lysine isopeptide (Lys-Gly) (interchain with G-Cter in SUMO2) cross-links involve residues Lys243, Lys287, and Lys305. Residues 322–338 are compositionally biased toward polar residues; that stretch reads QTTKQADTATSKVSGKN. The disordered stretch occupies residues 322–356; it reads QTTKQADTATSKVSGKNGSAAREKPRRWTPYPSQK. Glycyl lysine isopeptide (Lys-Gly) (interchain with G-Cter in SUMO2) cross-links involve residues Lys356, Lys365, Lys371, and Lys417. The segment at 389-423 is disordered; that stretch reads IQEPQTDETRNSPTQKTQKEIHTGSLNHKASSDSA. Positions 412–423 are enriched in polar residues; that stretch reads GSLNHKASSDSA. The residue at position 422 (Ser422) is a Phosphoserine. Glycyl lysine isopeptide (Lys-Gly) (interchain with G-Cter in SUMO2) cross-links involve residues Lys451, Lys461, Lys477, Lys492, Lys505, Lys515, Lys525, Lys539, and Lys557. The disordered stretch occupies residues 457–501; sequence CPATKSLSQKQDPKNISKNTKTNFFSPGEHSNPSNKPTVEDNHGP. A compositionally biased stretch (polar residues) spans 461–493; the sequence is KSLSQKQDPKNISKNTKTNFFSPGEHSNPSNKP. A disordered region spans residues 586–637; it reads LEDESDGETSDTEKHGTKIGTLGSATTELLSGSTRTADEKEEDDRILKTSRE. Position 590 is a phosphoserine (Ser590). Lys603 is covalently cross-linked (Glycyl lysine isopeptide (Lys-Gly) (interchain with G-Cter in SUMO2)). The span at 608 to 620 shows a compositional bias: polar residues; sequence GSATTELLSGSTR. 2 positions are modified to phosphoserine: Ser641 and Ser661. Glycyl lysine isopeptide (Lys-Gly) (interchain with G-Cter in SUMO2) cross-links involve residues Lys671, Lys684, Lys705, Lys721, Lys741, Lys775, and Lys807. Phosphoserine occurs at positions 859, 861, 864, and 893. The interval 879–945 is disordered; sequence EEGTGKENEP…HSAQLSSDHI (67 aa). Over residues 888–906 the composition is skewed to polar residues; it reads PQQMVSPSNSLRAGQSQKA. Glycyl lysine isopeptide (Lys-Gly) (interchain with G-Cter in SUMO2) cross-links involve residues Lys905 and Lys911. Ser937 is subject to Phosphoserine. Lys953 participates in a covalent cross-link: Glycyl lysine isopeptide (Lys-Gly) (interchain with G-Cter in SUMO2). Polar residues predominate over residues 958–976; that stretch reads QERSIPPSENQNSQESNGE. 4 disordered regions span residues 958-982, 997-1048, 1121-1140, and 1182-1218; these read QERS…CLSS, ATDS…KERS, EPSE…RRNS, and PTFQ…VPPS. Thr1021 is modified (phosphothreonine). Ser1025, Ser1026, and Ser1031 each carry phosphoserine. The segment covering 1035-1045 has biased composition (basic residues); sequence KNKRRKIKGKK. Position 1249 is a phosphoserine (Ser1249). A disordered region spans residues 1252 to 1483; the sequence is ESTESFHEPS…EVSSTSEIGT (232 aa). Basic and acidic residues predominate over residues 1255 to 1277; the sequence is ESFHEPSQELKFSVEQRNTRNRE. Residue Lys1265 forms a Glycyl lysine isopeptide (Lys-Gly) (interchain with G-Cter in SUMO2) linkage. 2 stretches are compositionally biased toward polar residues: residues 1278–1291 and 1299–1312; these read NSPS…SSIN and KGNS…SSFL. Phosphoserine occurs at positions 1279, 1281, and 1284. Lys1299 is covalently cross-linked (Glycyl lysine isopeptide (Lys-Gly) (interchain with G-Cter in SUMO2)). Ser1302 carries the phosphoserine modification. A Glycyl lysine isopeptide (Lys-Gly) (interchain with G-Cter in SUMO2) cross-link involves residue Lys1324. Residue Ser1328 is modified to Phosphoserine. Residues 1333–1346 are compositionally biased toward polar residues; the sequence is PEQQAESTLTSAET. Residues 1349–1362 are compositionally biased toward basic residues; that stretch reads SKKKKKLRKKKSLR. Ser1370 is modified (phosphoserine). Thr1372 is subject to Phosphothreonine. Residues Lys1380, Lys1392, and Lys1395 each participate in a glycyl lysine isopeptide (Lys-Gly) (interchain with G-Cter in SUMO2) cross-link. Basic and acidic residues-rich tracts occupy residues 1402–1416 and 1444–1456; these read EDSR…VRDE and GEEK…KKDI. A Glycyl lysine isopeptide (Lys-Gly) (interchain with G-Cter in SUMO2) cross-link involves residue Lys1454. Polar residues predominate over residues 1457-1481; it reads WNSTEQNPLETSRSGCDEVSSTSEI. Position 1468 is a phosphoserine (Ser1468). Residues Lys1486 and Lys1504 each participate in a glycyl lysine isopeptide (Lys-Gly) (interchain with G-Cter in SUMO2) cross-link. Residues 1502 to 1513 are compositionally biased toward polar residues; the sequence is SIKGSKNSSEIS. The interval 1502–1527 is disordered; that stretch reads SIKGSKNSSEISSEPGDDDEPTEGSF. 6 WD repeats span residues 1529-1568, 1570-1611, 1654-1695, 1698-1737, 1738-1775, and 1778-1815; these read GHQA…GVFE, HTSK…CVEQ, HGPR…LLRT, GHSK…RIYK, GHNH…RLQV, and GHKD…NYRC. Residue Lys1585 forms a Glycyl lysine isopeptide (Lys-Gly) (interchain with G-Cter in SUMO2) linkage. Lys1737 is covalently cross-linked (Glycyl lysine isopeptide (Lys-Gly) (interchain with G-Cter in SUMO2)). The segment at 1813–1838 adopts a C2H2-type 2; atypical zinc-finger fold; that stretch reads YRCWWHGCSLIFGVVDHLKQHLLTDH. Lys1864 is covalently cross-linked (Glycyl lysine isopeptide (Lys-Gly) (interchain with G-Cter in SUMO2)).

As to quaternary structure, interacts with KNOP1. Interacts with TARDBP and NUP107. Interacts (via N-terminus) with RBM39. Interacts with the SH3 domains of FYN and GRB2. Phosphorylated by FYN in vitro.

It localises to the nucleus. It is found in the nucleolus. The protein resides in the nucleus speckle. Functionally, RNA-binding protein. Specifically binds to 5'-GGGGCC-3' sequence repeats in RNA. Essential for maintenance of peripheral motor neuron and skeletal muscle function. Required for normal expression and/or alternative splicing of a number of genes in spinal cord and skeletal muscle, including the neurite outgrowth inhibitor RTN4. Also contributes to normal mitochondrial respiratory function in motor neurons, via an unknown mechanism. This Homo sapiens (Human) protein is Zinc finger protein 106 (ZNF106).